The primary structure comprises 2690 residues: Non-reducing polyketide synthase pigA (2690 aa).

The Starter acyltransferase (SAT) domain maps to 96–211; that stretch reads NILLSPLVVI…AELSRVLQDF (116 aa). Cys140 acts as the Nucleophile; for transacylase activity in catalysis. His258 acts as the Proton donor/acceptor; for transacylase activity in catalysis. A Ketosynthase family 3 (KS3) domain is found at 388 to 804; the sequence is ENDIAVIGMS…GSNASLIVTQ (417 aa). Residues Cys553, His688, and His727 each act as for beta-ketoacyl synthase activity in the active site. Residues 915–1182 form the Malonyl-CoA:ACP transacylase (MAT) domain; that stretch reads FGGQISTFVG…VQRLAKQHPS (268 aa). Positions 1296-1426 are N-terminal hotdog fold; sequence LTFVGYQDKD…GKVFFRSVDD (131 aa). The region spanning 1296-1602 is the PKS/mFAS DH domain; that stretch reads LTFVGYQDKD…YAKVPKMSMS (307 aa). The product template (PT) domain stretch occupies residues 1323-1600; that stretch reads LVSGHLIAQT…INYAKVPKMS (278 aa). Residue His1327 is the Proton acceptor; for dehydratase activity of the active site. A C-terminal hotdog fold region spans residues 1454–1602; the sequence is ADDIIQGRNI…YAKVPKMSMS (149 aa). The Proton donor; for dehydratase activity role is filled by Asp1510. In terms of domain architecture, Carrier 1 spans 1657–1731; it reads PDISGKVRAM…GLLRCIQEAL (75 aa). An O-(pantetheine 4'-phosphoryl)serine modification is found at Ser1691. Residues 1731–1764 form a disordered region; it reads LGPSEGVEEETDNEEGEDGESSENPSVFTPSDAA. The span at 1736–1751 shows a compositional bias: acidic residues; the sequence is GVEEETDNEEGEDGES. Over residues 1755–1764 the composition is skewed to polar residues; sequence PSVFTPSDAA. In terms of domain architecture, Carrier 2 spans 1768–1842; the sequence is SSAKADVAEF…EFDVKVNGKS (75 aa). Residue Ser1802 is modified to O-(pantetheine 4'-phosphoryl)serine. The segment at 1948–2255 is methyltransferase domain; that stretch reads QTLERIKYLP…EVNIQRIFLA (308 aa). Residues 2320 to 2564 form the Thioester reductase (TE) domain; sequence VTGATGSLGS…LSWTPVNDVA (245 aa).

The cofactor is pantetheine 4'-phosphate.

It participates in secondary metabolite biosynthesis. Its function is as follows. Non-reducing polyketide synthase; part of the gene cluster that mediates the biosynthesis of azaphilone pigments (MonAzPs), a complex mixture of compounds with a common azaphilone skeleton very widely used as food colorants. PigA catalyzes the first step of MonAzPs biosynthesis and forms the hexaketide precursor from successive condensations of five malonyl-CoA units, with a simple acetyl-CoA starter unit. The starter acyl transferase (SAT) domain of pigA selects an acetyl-CoA starter unit, and the ketoacyl synthase (KS)-acyl transferase (AT)-acyl carrier protein (ACP) domains extend this starter unit five times with malonyl-CoA in five successive decarboxylative Claisen condensation cycles. The methyltransferase (MT) domain conducts a single C-methylation at C-4, most likely at the pentaketide stage. The reactive hexaketide chain then undergoes a product template (PT) domain-mediated C-2 to C-7 aldol cyclization to afford the first aromatic ring, followed by reductive release of the first pathway intermediate by the NADPH-dependent reductive release (R) domain. The role of esterase pigG is not clear, but it may play at most a supplementary role in the formation of the benzaldehyde produced by the pigA nrPKS. This very reactive benzaldehyde is intercepted by the pigC ketoreductase that to provide the first stable enzyme-free MonAzPs intermediate, 6-(4-hydroxy-2-oxopentyl)-3-methyl-2,4-dioxocyclohexane carbaldehyde, also known as M7PKS-1. The FAD-dependent monooxygenase pigN hydroxylates M7PKS-1 at C-4, which triggers the formation of the pyran ring. PigJ, pigK and pigD are involved in the acetylation of the pyran ring. PigJ and pigK form the two subunits of a dedicated fungal FAS that produces the side chain fatty acyl moiety of MonAzPs and pigD transfers the fatty acyl chain to the C-4 alcohol. PigM and pigO are involved in the elimination of the omega-1 alcohol. PigM acts as an O-acetyltransferase that synthesizes the putative O-11 acetyl intermediate whereas pigO eliminates acetic acid to yield an intermediate with a C10(11) double bond. The dehydration of the C-11 alcohol followed by the reduction of the C6(7) double bond by the NAD(P)H-dependent oxidoreductase pigE increases the electrophilicity of the C-5 ketone of the resulting acyl benzopyran. This in turn sets up the C-5 ketone for an intramolecular Knoevenagel aldol condensation with the C-20 enol of the side chain. This condensation affords the characteristic linear tricyclic carbon skeletons of the yellow pigments that serve as the common precursors for the classical yellow pigments monascin and ankaflavin, orange pigments rubopunctatin and monascorubrin, and red pigments ribropunctamine and monascorubramine. The FAD-dependent oxidoreductase pigF is especially invoved in the biosynthesis of orange and red pigments via desaturation of C6(7). In Monascus ruber (Mold), this protein is Non-reducing polyketide synthase pigA.